Here is a 441-residue protein sequence, read N- to C-terminus: Cytochrome c biogenesis protein Ccs1 (441 aa).

3 helical membrane passes run 19 to 39 (LKLA…GTVI), 78 to 98 (TWWF…CTLA), and 164 to 184 (IGPI…LLGN).

Belongs to the Ccs1/CcsB family. In terms of assembly, may interact with CcsA.

Its subcellular location is the plastid. The protein resides in the chloroplast thylakoid membrane. Required during biogenesis of c-type cytochromes (cytochrome c6 and cytochrome f) at the step of heme attachment. The protein is Cytochrome c biogenesis protein Ccs1 of Rhodomonas salina (Cryptomonas salina).